Here is a 132-residue protein sequence, read N- to C-terminus: MDVTRLLLATLLVFLCFFTVYSHLPPEEKLRDDRSLRSNSSVNLLDFPSVSIVALNKKSKQISRKEAEKKRSSKKEASMKKVAQPRTPLSAPCVATRDSCKPPAPACCDPCASCQCRFFRSACSCRVLSLNC.

An N-terminal signal peptide occupies residues 1–22; it reads MDVTRLLLATLLVFLCFFTVYS. N-linked (GlcNAc...) asparagine glycosylation occurs at Asn39. The segment at 62 to 93 is disordered; it reads ISRKEAEKKRSSKKEASMKKVAQPRTPLSAPC. Residues 63-79 are compositionally biased toward basic and acidic residues; it reads SRKEAEKKRSSKKEASM. 5 disulfide bridges follow: Cys93-Cys108, Cys100-Cys114, Cys107-Cys125, Cys111-Cys132, and Cys116-Cys123. Residues 93–132 form the Agouti domain; it reads CVATRDSCKPPAPACCDPCASCQCRFFRSACSCRVLSLNC.

It localises to the secreted. Its function is as follows. Involved in the regulation of melanogenesis. The binding of ASP to MC1R precludes alpha-MSH initiated signaling and thus blocks production of cAMP, leading to a down-regulation of eumelanogenesis (brown/black pigment) and thus increasing synthesis of pheomelanin (yellow/red pigment). This Trachypithecus auratus (Javan langur) protein is Agouti-signaling protein (ASIP).